The sequence spans 132 residues: ATP synthase epsilon chain (132 aa).

The protein belongs to the ATPase epsilon chain family. F-type ATPases have 2 components, CF(1) - the catalytic core - and CF(0) - the membrane proton channel. CF(1) has five subunits: alpha(3), beta(3), gamma(1), delta(1), epsilon(1). CF(0) has three main subunits: a, b and c.

It is found in the cell membrane. Functionally, produces ATP from ADP in the presence of a proton gradient across the membrane. The polypeptide is ATP synthase epsilon chain (Desulforamulus reducens (strain ATCC BAA-1160 / DSM 100696 / MI-1) (Desulfotomaculum reducens)).